The following is a 162-amino-acid chain: UPF0305 protein MmarC7_1691 (162 aa).

Belongs to the UPF0305 family.

In Methanococcus maripaludis (strain C7 / ATCC BAA-1331), this protein is UPF0305 protein MmarC7_1691.